We begin with the raw amino-acid sequence, 355 residues long: Erythronate-4-phosphate dehydrogenase (355 aa).

Residues Ser45 and Thr66 each coordinate substrate. Asp146 is an NAD(+) binding site. Arg206 is an active-site residue. Residue Asp229 participates in NAD(+) binding. Residue Glu234 is part of the active site. His251 acts as the Proton donor in catalysis. Gly254 serves as a coordination point for NAD(+). A substrate-binding site is contributed by Tyr255.

This sequence belongs to the D-isomer specific 2-hydroxyacid dehydrogenase family. PdxB subfamily. In terms of assembly, homodimer.

It localises to the cytoplasm. It catalyses the reaction 4-phospho-D-erythronate + NAD(+) = (R)-3-hydroxy-2-oxo-4-phosphooxybutanoate + NADH + H(+). Its pathway is cofactor biosynthesis; pyridoxine 5'-phosphate biosynthesis; pyridoxine 5'-phosphate from D-erythrose 4-phosphate: step 2/5. Its function is as follows. Catalyzes the oxidation of erythronate-4-phosphate to 3-hydroxy-2-oxo-4-phosphonooxybutanoate. The sequence is that of Erythronate-4-phosphate dehydrogenase from Acinetobacter baumannii (strain ACICU).